Reading from the N-terminus, the 557-residue chain is MTESFAQLFEESLKEIETRPGSIVRGVVVAIDKDVVLVDAGLKSESAIPVEQFKNAQGEIEIQVGDEVDVALDAVEDGFGETLLSREKAKRHEAWLMLEKAYEESATVTGVINGKVKGGFTVELNGIRAFLPGSLVDVRPVRDTLHLEGKELEFKVIKLDQKRNNVVVSRRAVIESENSAERDQLLENLQEGMEVKGIVKNLTDYGAFVDLGGVDGLLHITDMAWKRVKHPSEIVNVGDEITVKVLKFDRERTRVSLGLKQLGEDPWVAIAKRYPEGTKLTGRVTNLTDYGCFVEIEEGVEGLVHVSEMDWTNKNIHPSKVVNVGDVVEVMVLDIDEERRRISLGLKQCKANPWQQFAETHNKGDRVEGKIKSITDFGIFIGLDGGIDGLVHLSDISWNVAGEEAVREYKKGDEIAAVVLQVDAERERISLGVKQLAEDPFNNYLSVNKKGAIVTGKVTAVDAKGATVELADGVEGYLRASEASRDRIEDATLVMSVGDEIEAKYTGVDRKNRVVSLSIRAKDEADEKDAIASVNNKQEEGNFSNAMAEAFKAAKGE.

S1 motif domains are found at residues 21–87, 105–171, 192–260, 277–347, 364–434, and 451–520; these read GSIV…LSRE, SATV…VSRR, GMEV…LGLK, GTKL…LGLK, GDRV…LGVK, and GAIV…LSIR.

Belongs to the bacterial ribosomal protein bS1 family.

Its function is as follows. Binds mRNA; thus facilitating recognition of the initiation point. It is needed to translate mRNA with a short Shine-Dalgarno (SD) purine-rich sequence. This Dickeya dadantii (strain 3937) (Erwinia chrysanthemi (strain 3937)) protein is Small ribosomal subunit protein bS1 (rpsA).